A 178-amino-acid polypeptide reads, in one-letter code: Protein AUXIN-REGULATED GENE INVOLVED IN ORGAN SIZE (178 aa).

Residues 1 to 85 form a disordered region; that stretch reads MYLLSPRNGD…GGGGGSNIRE (85 aa). Residues 10–27 are compositionally biased toward acidic residues; sequence DEEDEQEEIQELISDDEP. The segment covering 33 to 47 has biased composition (low complexity); sequence ASCATAASSSSSSGS. An organ Size Related (OSR) domain region spans residues 100–151; that stretch reads FSVESLLLLVCVTASLVILPLVLPPLPPPPSMLMLVPVAMLVLLLALAFMPT. 2 helical membrane-spanning segments follow: residues 105–125 and 131–151; these read LLLL…LPPL and MLML…FMPT. A disordered region spans residues 153–178; the sequence is TSSSSSAGGGGGGGRNGATTGHAPYL. A compositionally biased stretch (gly residues) spans 159 to 168; sequence AGGGGGGGRN. The segment covering 169 to 178 has biased composition (low complexity); it reads GATTGHAPYL.

It belongs to the plant organ size related (OSR) protein family. Mostly expressed in young tissues such as young roots, young leaves, and seeds. Also present in stems, mature leaves, and spikelets.

It localises to the membrane. The protein resides in the nucleus. The protein localises to the cytoplasm. Its subcellular location is the endoplasmic reticulum. Its function is as follows. Promotes both cell expansion and proliferation-dependent organ growth. This chain is Protein AUXIN-REGULATED GENE INVOLVED IN ORGAN SIZE (ARGOS), found in Oryza sativa subsp. japonica (Rice).